An 86-amino-acid polypeptide reads, in one-letter code: MKSIVFVALLGLALLAVVCSASEDAHKELLKEVVRAMVVDKTDAVQAEERECRWYLGGCSQDGDCCKHLQCHSNYEWCVWDGTFSK.

Positions 1 to 21 (MKSIVFVALLGLALLAVVCSA) are cleaved as a signal peptide. A propeptide spanning residues 22–50 (SEDAHKELLKEVVRAMVVDKTDAVQAEER) is cleaved from the precursor. Disulfide bonds link C52/C66, C59/C71, and C65/C78.

It belongs to the neurotoxin 10 (Hwtx-1) family. 17 (Hntx-9) subfamily. Expressed by the venom gland.

The protein localises to the secreted. Functionally, ion channel inhibitor. The sequence is that of Omega-theraphotoxin-Hhn1a 2 from Cyriopagopus hainanus (Chinese bird spider).